The sequence spans 817 residues: Putative ATP-dependent RNA helicase R350 (817 aa).

Residues 1–29 are disordered; sequence MNRRNRSNDLNPEPSIENPNNQIAEEFPG. Residues 17-29 are compositionally biased toward polar residues; it reads ENPNNQIAEEFPG. Residues 93 to 271 form the Helicase ATP-binding domain; it reads LNPQGPYTSI…ALMFNLLRPG (179 aa). Residue 106–113 participates in ATP binding; that stretch reads HGLGSGKT. The DEAH box motif lies at 206-209; it reads DEAH. In terms of domain architecture, Helicase C-terminal spans 495–661; it reads LAIAFMTYIS…STDEYVEDQA (167 aa).

Belongs to the DEAD box helicase family. DEAH subfamily.

It localises to the virion. It carries out the reaction ATP + H2O = ADP + phosphate + H(+). In Acanthamoeba polyphaga mimivirus (APMV), this protein is Putative ATP-dependent RNA helicase R350.